Here is a 141-residue protein sequence, read N- to C-terminus: 15 kDa lipoprotein (141 aa).

Residues 1 to 17 (MVKRGRFALCLAVLLGA) form the signal peptide. A lipid anchor (N-palmitoyl cysteine) is attached at cysteine 18. Cysteine 18 carries the S-diacylglycerol cysteine lipid modification.

The protein resides in the cell membrane. The protein is 15 kDa lipoprotein (tpp15) of Treponema pallidum (strain Nichols).